A 381-amino-acid polypeptide reads, in one-letter code: Succinyl-diaminopimelate desuccinylase (381 aa).

His-71 lines the Zn(2+) pocket. The active site involves Asp-73. A Zn(2+)-binding site is contributed by Asp-104. The active-site Proton acceptor is Glu-138. The Zn(2+) site is built by Glu-139, Glu-167, and His-353.

Belongs to the peptidase M20A family. DapE subfamily. Homodimer. Requires Zn(2+) as cofactor. The cofactor is Co(2+).

The enzyme catalyses N-succinyl-(2S,6S)-2,6-diaminopimelate + H2O = (2S,6S)-2,6-diaminopimelate + succinate. The protein operates within amino-acid biosynthesis; L-lysine biosynthesis via DAP pathway; LL-2,6-diaminopimelate from (S)-tetrahydrodipicolinate (succinylase route): step 3/3. Its function is as follows. Catalyzes the hydrolysis of N-succinyl-L,L-diaminopimelic acid (SDAP), forming succinate and LL-2,6-diaminopimelate (DAP), an intermediate involved in the bacterial biosynthesis of lysine and meso-diaminopimelic acid, an essential component of bacterial cell walls. In Shewanella piezotolerans (strain WP3 / JCM 13877), this protein is Succinyl-diaminopimelate desuccinylase.